The primary structure comprises 76 residues: Conotoxin Cl6.4 (76 aa).

Residues 1-19 form the signal peptide; the sequence is MTLTFLLVVALCMLTTCHT. A propeptide spanning residues 20-47 is cleaved from the precursor; that stretch reads ENYRDSQKVSPVRSIGKTQFARSLRLSE. 3 cysteine pairs are disulfide-bonded: C50–C66, C57–C70, and C65–C75.

Expressed by the venom duct.

The protein localises to the secreted. The protein is Conotoxin Cl6.4 of Californiconus californicus (California cone).